Here is a 66-residue protein sequence, read N- to C-terminus: MRARELRAQTLDQMKDELAKLKKEQFNLRFQKATGQLEKTARVRQVRRDIARIKTFLHQKLSESKV.

Belongs to the universal ribosomal protein uL29 family.

This chain is Large ribosomal subunit protein uL29, found in Bartonella tribocorum (strain CIP 105476 / IBS 506).